A 149-amino-acid chain; its full sequence is Myoglobin (149 aa).

Threonine 2 carries the N-acetylthreonine modification. Residues 2–143 (TEWEHVNKVW…ICSDLETLYK (142 aa)) enclose the Globin domain. Histidine 60 lines the nitrite pocket. O2 is bound at residue histidine 60. Histidine 89 is a heme b binding site.

It belongs to the globin family. Monomeric.

The protein resides in the cytoplasm. It is found in the sarcoplasm. It carries out the reaction Fe(III)-heme b-[protein] + nitric oxide + H2O = Fe(II)-heme b-[protein] + nitrite + 2 H(+). The enzyme catalyses H2O2 + AH2 = A + 2 H2O. In terms of biological role, monomeric heme protein which primary function is to store oxygen and facilitate its diffusion within muscle tissues. Reversibly binds oxygen through a pentacoordinated heme iron and enables its timely and efficient release as needed during periods of heightened demand. Depending on the oxidative conditions of tissues and cells, and in addition to its ability to bind oxygen, it also has a nitrite reductase activity whereby it regulates the production of bioactive nitric oxide. Under stress conditions, like hypoxia and anoxia, it also protects cells against reactive oxygen species thanks to its pseudoperoxidase activity. This Heterodontus portusjacksoni (Port Jackson shark) protein is Myoglobin (mb).